Consider the following 404-residue polypeptide: Probable tRNA sulfurtransferase (404 aa).

The THUMP domain maps to 60 to 165 (TAVAESLKQV…EEAAYLSYET (106 aa)). ATP-binding positions include 183–184 (ML), 208–209 (HF), Arg-265, Gly-287, and Gln-296.

Belongs to the ThiI family.

The protein resides in the cytoplasm. It catalyses the reaction [ThiI sulfur-carrier protein]-S-sulfanyl-L-cysteine + a uridine in tRNA + 2 reduced [2Fe-2S]-[ferredoxin] + ATP + H(+) = [ThiI sulfur-carrier protein]-L-cysteine + a 4-thiouridine in tRNA + 2 oxidized [2Fe-2S]-[ferredoxin] + AMP + diphosphate. The catalysed reaction is [ThiS sulfur-carrier protein]-C-terminal Gly-Gly-AMP + S-sulfanyl-L-cysteinyl-[cysteine desulfurase] + AH2 = [ThiS sulfur-carrier protein]-C-terminal-Gly-aminoethanethioate + L-cysteinyl-[cysteine desulfurase] + A + AMP + 2 H(+). Its pathway is cofactor biosynthesis; thiamine diphosphate biosynthesis. Catalyzes the ATP-dependent transfer of a sulfur to tRNA to produce 4-thiouridine in position 8 of tRNAs, which functions as a near-UV photosensor. Also catalyzes the transfer of sulfur to the sulfur carrier protein ThiS, forming ThiS-thiocarboxylate. This is a step in the synthesis of thiazole, in the thiamine biosynthesis pathway. The sulfur is donated as persulfide by IscS. The chain is Probable tRNA sulfurtransferase from Streptococcus pneumoniae serotype 19F (strain G54).